A 122-amino-acid chain; its full sequence is Small ribosomal subunit protein bS16 (122 aa).

The segment at 87 to 122 (VGKAKQAEARKAGAKNVAKQAAEAKAEETPADNTEA) is disordered.

This sequence belongs to the bacterial ribosomal protein bS16 family.

The protein is Small ribosomal subunit protein bS16 of Prochlorococcus marinus (strain MIT 9303).